We begin with the raw amino-acid sequence, 122 residues long: uncharacterized protein (122 aa).

A run of 4 helical transmembrane segments spans residues 7 to 27, 29 to 49, 62 to 82, and 89 to 109; these read IVAIVTSIAVICISLTVIFCD, LVLAVGVPTLVLLWLVFLGWI, AITGSIVIAFFIILIAISKNP, and KEIFSLFFGMVTTIIGYYFGY.

The protein resides in the cell membrane. This is an uncharacterized protein from Methanocaldococcus jannaschii (strain ATCC 43067 / DSM 2661 / JAL-1 / JCM 10045 / NBRC 100440) (Methanococcus jannaschii).